Reading from the N-terminus, the 433-residue chain is Tol-Pal system protein TolB (433 aa).

A signal peptide spans 1 to 21 (MINLFRGLLVVLCFASAMVAA).

Belongs to the TolB family. As to quaternary structure, the Tol-Pal system is composed of five core proteins: the inner membrane proteins TolA, TolQ and TolR, the periplasmic protein TolB and the outer membrane protein Pal. They form a network linking the inner and outer membranes and the peptidoglycan layer.

Its subcellular location is the periplasm. Part of the Tol-Pal system, which plays a role in outer membrane invagination during cell division and is important for maintaining outer membrane integrity. This chain is Tol-Pal system protein TolB, found in Pseudomonas syringae pv. tomato (strain ATCC BAA-871 / DC3000).